A 436-amino-acid chain; its full sequence is Cyclic GMP-AMP synthase (436 aa).

Q112–Y117 lines the GTP pocket. Positions 131 and 133 each coordinate Mg(2+). R182 contacts ATP. Residue D193 participates in Mg(2+) binding. S259 provides a ligand contact to ATP. The GTP site is built by K287, S301, and D348. Disordered regions lie at residues R339 to K358 and A417 to G436. Residues E419 to G436 show a composition bias toward polar residues. A Glycyl lysine isopeptide (Gly-Lys) (interchain with K-? in acceptor proteins) cross-link involves residue G436.

The protein belongs to the CD-NTase family. A01 subfamily. As to quaternary structure, monomer. Interacts with Cap2 in the presence and absence of phage T2. A Cap2 dimer is bound on either side by a DncV monomer. The cofactor is Mg(2+). In terms of processing, in bacteria expressing capV-cdnD-cap2, this protein is conjugated to a number of other proteins (by Cap2 via this protein's C-terminal Gly residue), many of which are involved in metabolism. More conjugated protein is found in the absence of Cap3.

It catalyses the reaction GTP + ATP = 3',3'-cGAMP + 2 diphosphate. Primed for activation by Cap2 which conjugates it to cellular proteins; priming is target protein-specific (green fluorescent protein does not activate the enzyme), but which protein(s) activate is unclear. Enzymatic activity of DncV is inhibited by folate-like molecules, such as 5-methyltetrahydrofolate di-glutamate and 5-methyltetrahydrofolate, suggesting the existence of a signaling pathway that links folate-like metabolism cofactors to the regulation of cyclic dinucleotide second messenger synthesis. Lacks a regulatory loop and is constitutively activated. Functionally, cyclic nucleotide synthase (second messenger synthase) of a CBASS antivirus system. CBASS (cyclic oligonucleotide-based antiphage signaling system) provides immunity against bacteriophages. The CD-NTase protein (DncV, this protein) synthesizes cyclic nucleotides in response to infection; these serve as specific second messenger signals. The signals activate a diverse range of effectors, leading to bacterial cell death and thus abortive phage infection. A type II-A(GA) CBASS system. Its function is as follows. Catalyzes the synthesis of 3',3'-cyclic GMP-AMP (cGAMP), a second messenger in cell signal transduction, from GTP and ATP in response to phage infection. Also able to produce c-di-AMP and c-di-GMP from ATP and GTP, respectively; however, cGAMP is the dominant molecule produced by DncV in vivo, contrary to the 2'3'-cGAMP produced by eukaryotes. Is required for efficient V.cholerae intestinal colonization, and down-regulates the colonization-influencing process of chemotaxis. Is not active with dATP, TTP, UTP or CTP. Its product controls the activity of cGAMP-activated phospholipase CapV, a patatin-like lipase that is a direct cGAMP receptor encoded in the dncV operon. Protects E.coli against phage infection. When the CBASS operon (capV-dncV-cap2-cap3) is introduced in E.coli MG1655 there is about 100-fold protection against phages P1 and T2. When the operon is introduced in E.coli MG1655 there is a more than 10(3) decrease in the efficiency of T2 plaque formation. Protects 100-fold against phage T5, offers no protection against T7. When the operon is introduced in E.coli MG1655 it protects against phages T2, T4, T5 and T6. Another paper shows the operon confers protection against phages P1, T2, T5 and T6 but not T4 or lambda. The protein is Cyclic GMP-AMP synthase of Vibrio cholerae serotype O1 (strain ATCC 39315 / El Tor Inaba N16961).